The sequence spans 296 residues: Tyrosine recombinase XerC (296 aa).

The Core-binding (CB) domain maps to 1–84 (MNKIQESFLY…TLRSFYEFWM (84 aa)). The region spanning 105-286 (YLPHFFYEEE…SNQQLRKVYL (182 aa)) is the Tyr recombinase domain. Catalysis depends on residues Arg145, Lys169, His238, Arg241, and His264. The O-(3'-phospho-DNA)-tyrosine intermediate role is filled by Tyr273.

It belongs to the 'phage' integrase family. XerC subfamily. As to quaternary structure, forms a cyclic heterotetrameric complex composed of two molecules of XerC and two molecules of XerD.

It is found in the cytoplasm. Site-specific tyrosine recombinase, which acts by catalyzing the cutting and rejoining of the recombining DNA molecules. The XerC-XerD complex is essential to convert dimers of the bacterial chromosome into monomers to permit their segregation at cell division. It also contributes to the segregational stability of plasmids. The sequence is that of Tyrosine recombinase XerC from Staphylococcus carnosus (strain TM300).